A 119-amino-acid chain; its full sequence is Large ribosomal subunit protein bL20 (119 aa).

Belongs to the bacterial ribosomal protein bL20 family.

Its function is as follows. Binds directly to 23S ribosomal RNA and is necessary for the in vitro assembly process of the 50S ribosomal subunit. It is not involved in the protein synthesizing functions of that subunit. This Rhodopseudomonas palustris (strain BisB18) protein is Large ribosomal subunit protein bL20.